The following is a 932-amino-acid chain: Calpain-like protease palB/cpr-8 (932 aa).

Residues 96 to 419 (KLHGNIFPPW…FDSLYVNWSP (324 aa)) form the Calpain catalytic domain. Active-site residues include Cys178, His346, and Asn366. The segment at 890 to 932 (QGHVTEGSDDDGGGGGGGGGGVHVEISSDGVVSIGEWEVADED) is disordered. A compositionally biased stretch (gly residues) spans 902–911 (GGGGGGGGGV).

Belongs to the peptidase C2 family. PalB/RIM13 subfamily.

Required for the proteolytic cleavage of the transcription factor pacc-1 in response to alkaline ambient pH. The chain is Calpain-like protease palB/cpr-8 (cpr-8) from Neurospora crassa (strain ATCC 24698 / 74-OR23-1A / CBS 708.71 / DSM 1257 / FGSC 987).